The following is a 411-amino-acid chain: Replication factor C subunit 2 (411 aa).

The tract at residues 1 to 36 is disordered; that stretch reads MADFFNLKARQQAAAQASSSKTPTSKQESNRLQPWV. A compositionally biased stretch (low complexity) spans 11–27; it reads QQAAAQASSSKTPTSKQ. ATP-binding positions include V36, R40, 73–81, N195, and R253; that span reads GPPGTGKTS.

Belongs to the activator 1 small subunits family. As to quaternary structure, heteropentamer of subunits RFC1, RFC2, RFC3, RFC4 and RFC5 that forms a complex with PCNA in the presence of ATP.

Its subcellular location is the nucleus. The elongation of primed DNA templates by DNA polymerase delta and epsilon requires the action of the accessory proteins proliferating cell nuclear antigen (PCNA) and activator 1. Subunit 2 binds ATP and single-stranded DNA. The polypeptide is Replication factor C subunit 2 (RFC2) (Phaeosphaeria nodorum (strain SN15 / ATCC MYA-4574 / FGSC 10173) (Glume blotch fungus)).